A 297-amino-acid polypeptide reads, in one-letter code: Mitochondrial citrate transporter A (297 aa).

3 Solcar repeats span residues 12–91 (PSSL…LKSL), 102–188 (PKTV…LKQM), and 199–286 (LGTA…TMDA). 6 consecutive transmembrane segments (helical) span residues 18-31 (IIAG…EIAI), 61-81 (SQWY…AGIR), 99-119 (ISGP…SLLA), 160-180 (FFQG…TRFS), 192-212 (YVAP…GIAG), and 251-272 (KDEG…LIMS).

The protein belongs to the mitochondrial carrier (TC 2.A.29) family.

It localises to the mitochondrion inner membrane. The catalysed reaction is citrate(in) + H(+)(in) = citrate(out) + H(+)(out). Functionally, mitochondrial transporter that mediates citrate export from mitochondria to cytoplasm. Both ctpA, ctpB, and ctpD play important roles in citric acid transport across the mitochondrial membrane and function in a redundant manner. The polypeptide is Mitochondrial citrate transporter A (Aspergillus niger (strain ATCC 1015 / CBS 113.46 / FGSC A1144 / LSHB Ac4 / NCTC 3858a / NRRL 328 / USDA 3528.7)).